We begin with the raw amino-acid sequence, 281 residues long: Phosphatidylglycerol--prolipoprotein diacylglyceryl transferase (281 aa).

Helical transmembrane passes span isoleucine 11–phenylalanine 31, leucine 57–tyrosine 77, valine 89–valine 109, isoleucine 121–isoleucine 141, proline 194–phenylalanine 214, glycine 222–phenylalanine 242, and isoleucine 255–tyrosine 275. Arginine 140 serves as a coordination point for a 1,2-diacyl-sn-glycero-3-phospho-(1'-sn-glycerol).

Belongs to the Lgt family.

Its subcellular location is the cell inner membrane. It carries out the reaction L-cysteinyl-[prolipoprotein] + a 1,2-diacyl-sn-glycero-3-phospho-(1'-sn-glycerol) = an S-1,2-diacyl-sn-glyceryl-L-cysteinyl-[prolipoprotein] + sn-glycerol 1-phosphate + H(+). Its pathway is protein modification; lipoprotein biosynthesis (diacylglyceryl transfer). Catalyzes the transfer of the diacylglyceryl group from phosphatidylglycerol to the sulfhydryl group of the N-terminal cysteine of a prolipoprotein, the first step in the formation of mature lipoproteins. The protein is Phosphatidylglycerol--prolipoprotein diacylglyceryl transferase of Buchnera aphidicola subsp. Acyrthosiphon pisum (strain Tuc7).